The sequence spans 764 residues: 5-methyltetrahydropteroyltriglutamate--homocysteine methyltransferase (764 aa).

Residues 16 to 19 (RELK) and lysine 115 each bind 5-methyltetrahydropteroyltri-L-glutamate. Residues 435 to 437 (IGS) and glutamate 488 contribute to the L-homocysteine site. L-methionine is bound by residues 435-437 (IGS) and glutamate 488. Residues 519–520 (RC) and tryptophan 565 each bind 5-methyltetrahydropteroyltri-L-glutamate. Aspartate 603 is an L-homocysteine binding site. Aspartate 603 contributes to the L-methionine binding site. Residue glutamate 609 coordinates 5-methyltetrahydropteroyltri-L-glutamate. Positions 645, 647, and 669 each coordinate Zn(2+). Histidine 698 acts as the Proton donor in catalysis. Cysteine 730 contributes to the Zn(2+) binding site.

This sequence belongs to the vitamin-B12 independent methionine synthase family. Requires Zn(2+) as cofactor.

It carries out the reaction 5-methyltetrahydropteroyltri-L-glutamate + L-homocysteine = tetrahydropteroyltri-L-glutamate + L-methionine. It functions in the pathway amino-acid biosynthesis; L-methionine biosynthesis via de novo pathway; L-methionine from L-homocysteine (MetE route): step 1/1. Catalyzes the transfer of a methyl group from 5-methyltetrahydrofolate to homocysteine resulting in methionine formation. The chain is 5-methyltetrahydropteroyltriglutamate--homocysteine methyltransferase from Burkholderia thailandensis (strain ATCC 700388 / DSM 13276 / CCUG 48851 / CIP 106301 / E264).